The primary structure comprises 149 residues: Calmodulin (149 aa).

Ala-2 is modified (N-acetylalanine). EF-hand domains are found at residues 8-43, 44-79, 81-116, and 117-149; these read EQIA…LGQN, PTEA…KMKD, DSEE…LGEK, and LTDE…MMSK. 14 residues coordinate Ca(2+): Asp-21, Asp-23, Asp-25, Thr-27, Glu-32, Asp-57, Asp-59, Asn-61, Thr-63, Glu-68, Asp-94, Asp-96, Asn-98, and Glu-105. Lys-116 bears the N6,N6,N6-trimethyllysine mark. 5 residues coordinate Ca(2+): Asp-130, Asp-132, Asp-134, Gln-136, and Glu-141.

It belongs to the calmodulin family.

Its function is as follows. Calmodulin mediates the control of a large number of enzymes, ion channels and other proteins by Ca(2+). Among the enzymes to be stimulated by the calmodulin-Ca(2+) complex are a number of protein kinases and phosphatases. This Saccharina japonica (Sweet kelp) protein is Calmodulin (cam).